The primary structure comprises 101 residues: Replication restart protein PriB (101 aa).

The SSB domain maps to 1 to 101 (MTTNSLVLSG…IHAENVELKT (101 aa)).

This sequence belongs to the PriB family. As to quaternary structure, homodimer. Interacts with PriA and DnaT. Component of the replication restart primosome. Primosome assembly occurs via a 'hand-off' mechanism. PriA binds to replication forks, subsequently PriB then DnaT bind; DnaT then displaces ssDNA to generate the helicase loading substrate.

Functionally, involved in the restart of stalled replication forks, which reloads the replicative helicase on sites other than the origin of replication; the PriA-PriB pathway is the major replication restart pathway. During primosome assembly it facilitates complex formation between PriA and DnaT on DNA; stabilizes PriA on DNA. Stimulates the DNA unwinding activity of PriA helicase. This Shewanella putrefaciens (strain CN-32 / ATCC BAA-453) protein is Replication restart protein PriB.